Consider the following 408-residue polypeptide: Acetylornithine aminotransferase (408 aa).

Pyridoxal 5'-phosphate contacts are provided by residues 107 to 108 (GT) and Phe-141. Arg-144 contributes to the N(2)-acetyl-L-ornithine binding site. 227 to 230 (DEIQ) is a binding site for pyridoxal 5'-phosphate. N6-(pyridoxal phosphate)lysine is present on Lys-256. Thr-284 is a N(2)-acetyl-L-ornithine binding site. Thr-285 contributes to the pyridoxal 5'-phosphate binding site.

This sequence belongs to the class-III pyridoxal-phosphate-dependent aminotransferase family. ArgD subfamily. As to quaternary structure, homodimer. Pyridoxal 5'-phosphate is required as a cofactor.

The protein localises to the cytoplasm. The catalysed reaction is N(2)-acetyl-L-ornithine + 2-oxoglutarate = N-acetyl-L-glutamate 5-semialdehyde + L-glutamate. It participates in amino-acid biosynthesis; L-arginine biosynthesis; N(2)-acetyl-L-ornithine from L-glutamate: step 4/4. The chain is Acetylornithine aminotransferase from Xanthomonas axonopodis pv. citri (strain 306).